We begin with the raw amino-acid sequence, 232 residues long: Urease accessory protein UreF (232 aa).

This sequence belongs to the UreF family. In terms of assembly, ureD, UreF and UreG form a complex that acts as a GTP-hydrolysis-dependent molecular chaperone, activating the urease apoprotein by helping to assemble the nickel containing metallocenter of UreC. The UreE protein probably delivers the nickel.

Its subcellular location is the cytoplasm. Required for maturation of urease via the functional incorporation of the urease nickel metallocenter. This Azorhizobium caulinodans (strain ATCC 43989 / DSM 5975 / JCM 20966 / LMG 6465 / NBRC 14845 / NCIMB 13405 / ORS 571) protein is Urease accessory protein UreF.